A 698-amino-acid polypeptide reads, in one-letter code: UvrABC system protein B (698 aa).

The Helicase ATP-binding domain occupies 35-210 (ARLQAGEKDI…TFRVRGDTVE (176 aa)). 48-55 (GATGTGKS) is an ATP binding site. The Beta-hairpin signature appears at 101-124 (YYDYYQPEAYVPSSDTYIEKDSSI). The 167-residue stretch at 438–604 (QIDDLLAEIN…PLRKRIGDIT (167 aa)) folds into the Helicase C-terminal domain. The 36-residue stretch at 654 to 689 (AELIQELTDQMHVAAGELQFEVAARLRDEISDLKKE) folds into the UVR domain.

This sequence belongs to the UvrB family. In terms of assembly, forms a heterotetramer with UvrA during the search for lesions. Interacts with UvrC in an incision complex.

The protein localises to the cytoplasm. In terms of biological role, the UvrABC repair system catalyzes the recognition and processing of DNA lesions. A damage recognition complex composed of 2 UvrA and 2 UvrB subunits scans DNA for abnormalities. Upon binding of the UvrA(2)B(2) complex to a putative damaged site, the DNA wraps around one UvrB monomer. DNA wrap is dependent on ATP binding by UvrB and probably causes local melting of the DNA helix, facilitating insertion of UvrB beta-hairpin between the DNA strands. Then UvrB probes one DNA strand for the presence of a lesion. If a lesion is found the UvrA subunits dissociate and the UvrB-DNA preincision complex is formed. This complex is subsequently bound by UvrC and the second UvrB is released. If no lesion is found, the DNA wraps around the other UvrB subunit that will check the other stand for damage. The chain is UvrABC system protein B from Beutenbergia cavernae (strain ATCC BAA-8 / DSM 12333 / CCUG 43141 / JCM 11478 / NBRC 16432 / NCIMB 13614 / HKI 0122).